The chain runs to 370 residues: 3-isopropylmalate dehydrogenase (370 aa).

77–90 (GPKWDGVPYDARPE) is a binding site for NAD(+). Substrate is bound by residues R97, R107, R135, and D226. Mg(2+) contacts are provided by D226, D250, and D254. NAD(+) is bound at residue 290-302 (GSAPDIAGKGMAN).

This sequence belongs to the isocitrate and isopropylmalate dehydrogenases family. LeuB type 1 subfamily. As to quaternary structure, homodimer. The cofactor is Mg(2+). Mn(2+) is required as a cofactor.

Its subcellular location is the cytoplasm. It carries out the reaction (2R,3S)-3-isopropylmalate + NAD(+) = 4-methyl-2-oxopentanoate + CO2 + NADH. It functions in the pathway amino-acid biosynthesis; L-leucine biosynthesis; L-leucine from 3-methyl-2-oxobutanoate: step 3/4. In terms of biological role, catalyzes the oxidation of 3-carboxy-2-hydroxy-4-methylpentanoate (3-isopropylmalate) to 3-carboxy-4-methyl-2-oxopentanoate. The product decarboxylates to 4-methyl-2 oxopentanoate. This Rhodopseudomonas palustris (strain ATCC BAA-98 / CGA009) protein is 3-isopropylmalate dehydrogenase.